Here is a 125-residue protein sequence, read N- to C-terminus: Phosphoribosyl-AMP cyclohydrolase (125 aa).

A Mg(2+)-binding site is contributed by Asp-74. Zn(2+) is bound at residue Cys-75. Residues Asp-76 and Asp-78 each contribute to the Mg(2+) site. Residues Cys-92 and Cys-99 each contribute to the Zn(2+) site.

This sequence belongs to the PRA-CH family. Homodimer. Mg(2+) serves as cofactor. Requires Zn(2+) as cofactor.

The protein resides in the cytoplasm. The catalysed reaction is 1-(5-phospho-beta-D-ribosyl)-5'-AMP + H2O = 1-(5-phospho-beta-D-ribosyl)-5-[(5-phospho-beta-D-ribosylamino)methylideneamino]imidazole-4-carboxamide. The protein operates within amino-acid biosynthesis; L-histidine biosynthesis; L-histidine from 5-phospho-alpha-D-ribose 1-diphosphate: step 3/9. Its function is as follows. Catalyzes the hydrolysis of the adenine ring of phosphoribosyl-AMP. The sequence is that of Phosphoribosyl-AMP cyclohydrolase from Geobacter sp. (strain M21).